The chain runs to 312 residues: Putative ring-cleaving dioxygenase MhqO (312 aa).

VOC domains lie at 7–131 and 152–269; these read GIHH…IVER and GFGG…IATD. His10, His217, and Glu265 together coordinate Fe cation.

This sequence belongs to the extradiol ring-cleavage dioxygenase family. The cofactor is Fe(2+).

It localises to the cytoplasm. Putative ring-cleavage dioxygenase that may contribute to the degradation of aromatic compounds. This is Putative ring-cleaving dioxygenase MhqO (mhqO) from Bacillus subtilis (strain 168).